The following is a 217-amino-acid chain: Adenosylcobinamide-GDP ribazoletransferase (217 aa).

5 helical membrane passes run 6–26, 39–61, 95–115, 116–136, and 162–182; these read ALLS…FKCA, GPAA…LLLM, GTGG…STAS, PLQL…VAAF, and ALAV…AVAL.

The protein belongs to the CobS family. It depends on Mg(2+) as a cofactor.

Its subcellular location is the cell membrane. It catalyses the reaction alpha-ribazole + adenosylcob(III)inamide-GDP = adenosylcob(III)alamin + GMP + H(+). It carries out the reaction alpha-ribazole 5'-phosphate + adenosylcob(III)inamide-GDP = adenosylcob(III)alamin 5'-phosphate + GMP + H(+). The protein operates within cofactor biosynthesis; adenosylcobalamin biosynthesis; adenosylcobalamin from cob(II)yrinate a,c-diamide: step 7/7. In terms of biological role, joins adenosylcobinamide-GDP and alpha-ribazole to generate adenosylcobalamin (Ado-cobalamin). Also synthesizes adenosylcobalamin 5'-phosphate from adenosylcobinamide-GDP and alpha-ribazole 5'-phosphate. The polypeptide is Adenosylcobinamide-GDP ribazoletransferase (Pyrobaculum calidifontis (strain DSM 21063 / JCM 11548 / VA1)).